The following is a 461-amino-acid chain: Glycine--tRNA ligase (461 aa).

2 residues coordinate substrate: Arg-99 and Glu-173. ATP-binding positions include 205-207, 215-220, 289-290, and 333-336; these read RNE, FRTREF, EL, and GADR. 220–224 provides a ligand contact to substrate; sequence FEQME. 329–333 contributes to the substrate binding site; sequence EPSLG.

Belongs to the class-II aminoacyl-tRNA synthetase family. Homodimer.

The protein localises to the cytoplasm. It carries out the reaction tRNA(Gly) + glycine + ATP = glycyl-tRNA(Gly) + AMP + diphosphate. Its function is as follows. Catalyzes the attachment of glycine to tRNA(Gly). This chain is Glycine--tRNA ligase, found in Lysinibacillus sphaericus (strain C3-41).